We begin with the raw amino-acid sequence, 630 residues long: Chaperone protein HtpG (630 aa).

Positions 1-341 (MTQNATSETL…SADLPLNVSR (341 aa)) are a; substrate-binding. The interval 342 to 558 (EILQESRDVR…QNDLSPHLLR (217 aa)) is b. The c stretch occupies residues 559–630 (MLKAAGQEVP…KRLNALLLKV (72 aa)).

It belongs to the heat shock protein 90 family. Homodimer.

The protein resides in the cytoplasm. Its function is as follows. Molecular chaperone. Has ATPase activity. This chain is Chaperone protein HtpG, found in Bordetella avium (strain 197N).